A 666-amino-acid chain; its full sequence is UvrABC system protein B (666 aa).

The Helicase ATP-binding domain occupies 26-183 (DSFQKGAEKV…RKLLHIQYNR (158 aa)). 39 to 46 (GVTGSGKT) lines the ATP pocket. The Beta-hairpin motif lies at 92-115 (YYDYYQPEAYVPSSDTFIEKDSSI). The Helicase C-terminal domain maps to 429–591 (QIEDLLVEIR…ITPLTIRKEV (163 aa)). The UVR domain maps to 625 to 660 (EVLKDKLREEMMKAAKELDFERAAILRDKMLSIQIN).

It belongs to the UvrB family. As to quaternary structure, forms a heterotetramer with UvrA during the search for lesions. Interacts with UvrC in an incision complex.

It localises to the cytoplasm. Functionally, the UvrABC repair system catalyzes the recognition and processing of DNA lesions. A damage recognition complex composed of 2 UvrA and 2 UvrB subunits scans DNA for abnormalities. Upon binding of the UvrA(2)B(2) complex to a putative damaged site, the DNA wraps around one UvrB monomer. DNA wrap is dependent on ATP binding by UvrB and probably causes local melting of the DNA helix, facilitating insertion of UvrB beta-hairpin between the DNA strands. Then UvrB probes one DNA strand for the presence of a lesion. If a lesion is found the UvrA subunits dissociate and the UvrB-DNA preincision complex is formed. This complex is subsequently bound by UvrC and the second UvrB is released. If no lesion is found, the DNA wraps around the other UvrB subunit that will check the other stand for damage. In Leptospira borgpetersenii serovar Hardjo-bovis (strain JB197), this protein is UvrABC system protein B.